Here is an 82-residue protein sequence, read N- to C-terminus: RNA-binding protein GWCH70_0105 (82 aa).

Belongs to the eukaryotic ribosomal protein eL8 family.

The sequence is that of RNA-binding protein GWCH70_0105 from Geobacillus sp. (strain WCH70).